The primary structure comprises 256 residues: Protein RGF1 INDUCIBLE TRANSCRIPTION FACTOR 1 (256 aa).

The B box-type zinc-finger motif lies at 21–59; the sequence is CPYHETAKKNERNVCCLDCCTSLCPHCVPSHRFHRLLQV.

Expressed predominantly in root meristematic zones.

Its subcellular location is the nucleus. Functionally, probable transcription factor that plays a central role in mediating RGF1 hormone peptide signaling leading to the production of reactive oxygen species (ROS) in roots to modulate meristem size and root growth, probably via oxidative post-translational modification of the transcription factor PLETHORA (e.g. PLT1 and PLT2). The protein is Protein RGF1 INDUCIBLE TRANSCRIPTION FACTOR 1 of Arabidopsis thaliana (Mouse-ear cress).